Reading from the N-terminus, the 644-residue chain is MNARVEQLEFQAEARQLLDLMVHSVYSNKDSFLRELISNASDALDKLRLEAFRNKDLDVDTSDLHIQIEVDKDARTLTIRDNGIGMTRAEVVDLIGTLAKSGTAELRQQLREAKNAQNEAASEELIGQFGIGFYSSFMVADKVELLTRKAGESEATKWESSGEGTYTIESVENAPQGTSVTLHLKPEDTEDELHDYTSEFKIKSLVKKYSDFIAWPIRMEVERRTPATEEGGEETVTREVETLNSMKALWARPKDEVSEEEYKEFYKHIAHAWDDPLEVIAMKAEGTFEYQALLFIPSHAPFDLFNRDAHTGIQLYVKRVFIMGDCDQLMPEYLRFVKGVVDAQDMSLNVSREILQQDRQIKAIRRRLTKKVLSTIKELQSERLDDYRTFWTQFGRVVKEGLLSDFDNQETLVQLCSFASTHSEEEATTLAQYVERMKEGQTQIFYATGETRQQILKSPHLEAFKAKGYEVLLLTDPVDEVWVGTVTEFDGKPLQSIAKGEVDLSAEGEESQAERDEQQKEFADLLAWLKDTLSDHVKEVRLSNRLTDSPACLITDAFGITPALARLYRASGQDIPVGKRILELNPKHPLVTGLRQAHQDRADDPSVAETAELLYGTALLAEGGALDDPARFAEILADRLARTL.

The segment at 1-352 is a; substrate-binding; that stretch reads MNARVEQLEF…AQDMSLNVSR (352 aa). Positions 353 to 566 are b; it reads EILQQDRQIK…AFGITPALAR (214 aa). The segment at 567–644 is c; sequence LYRASGQDIP…ILADRLARTL (78 aa).

Belongs to the heat shock protein 90 family. Homodimer.

The protein resides in the cytoplasm. Molecular chaperone. Has ATPase activity. The sequence is that of Chaperone protein HtpG from Mycolicibacterium paratuberculosis (strain ATCC BAA-968 / K-10) (Mycobacterium paratuberculosis).